The sequence spans 290 residues: Pyridoxal 5'-phosphate synthase subunit PdxS (290 aa).

Asp-22 serves as a coordination point for D-ribose 5-phosphate. The Schiff-base intermediate with D-ribose 5-phosphate role is filled by Lys-79. Gly-151 contributes to the D-ribose 5-phosphate binding site. A D-glyceraldehyde 3-phosphate-binding site is contributed by Arg-163. D-ribose 5-phosphate-binding positions include Gly-212 and 233 to 234 (GS).

This sequence belongs to the PdxS/SNZ family. In the presence of PdxT, forms a dodecamer of heterodimers.

The enzyme catalyses aldehydo-D-ribose 5-phosphate + D-glyceraldehyde 3-phosphate + L-glutamine = pyridoxal 5'-phosphate + L-glutamate + phosphate + 3 H2O + H(+). Its pathway is cofactor biosynthesis; pyridoxal 5'-phosphate biosynthesis. Its function is as follows. Catalyzes the formation of pyridoxal 5'-phosphate from ribose 5-phosphate (RBP), glyceraldehyde 3-phosphate (G3P) and ammonia. The ammonia is provided by the PdxT subunit. Can also use ribulose 5-phosphate and dihydroxyacetone phosphate as substrates, resulting from enzyme-catalyzed isomerization of RBP and G3P, respectively. The chain is Pyridoxal 5'-phosphate synthase subunit PdxS from Clostridium botulinum (strain Langeland / NCTC 10281 / Type F).